We begin with the raw amino-acid sequence, 365 residues long: Ribosomal RNA large subunit methyltransferase M (365 aa).

Residues serine 194, cysteine 227 to glycine 230, aspartate 246, aspartate 266, and aspartate 284 each bind S-adenosyl-L-methionine. Catalysis depends on lysine 313, which acts as the Proton acceptor.

The protein belongs to the class I-like SAM-binding methyltransferase superfamily. RNA methyltransferase RlmE family. RlmM subfamily. As to quaternary structure, monomer.

It is found in the cytoplasm. The enzyme catalyses cytidine(2498) in 23S rRNA + S-adenosyl-L-methionine = 2'-O-methylcytidine(2498) in 23S rRNA + S-adenosyl-L-homocysteine + H(+). Catalyzes the 2'-O-methylation at nucleotide C2498 in 23S rRNA. This chain is Ribosomal RNA large subunit methyltransferase M, found in Pasteurella multocida (strain Pm70).